The primary structure comprises 95 residues: Large ribosomal subunit protein bL27 (95 aa).

Residues 1 to 21 are disordered; it reads MAHKKGASSSRNGRDSNAQRL. Residues 7-19 show a composition bias toward polar residues; that stretch reads ASSSRNGRDSNAQ.

The protein belongs to the bacterial ribosomal protein bL27 family.

The chain is Large ribosomal subunit protein bL27 from Parafrankia sp. (strain EAN1pec).